The following is a 207-amino-acid chain: Serotype 2 fimbrial subunit (207 aa).

The N-terminal stretch at 1 to 26 is a signal peptide; sequence MQIPFQRALRLCLRAALAAIASAAHA. Cysteines 42 and 85 form a disulfide.

Belongs to the fimbrial protein family.

It localises to the fimbrium. Its function is as follows. Bordetella pertussis is the causative agent of whooping cough. An essential step in the disease process is the attachment of the bacteria to the ciliated epithelium of the respiratory tract, enabling the organism to resist normal host-clearance mechanisms. It is unclear which bacterial cell surface component are responsible for adherence but the fimbriae of B.pertussis are prime candidates for being involved in this process. This is Serotype 2 fimbrial subunit (fim2) from Bordetella pertussis (strain Tohama I / ATCC BAA-589 / NCTC 13251).